A 91-amino-acid chain; its full sequence is Small ribosomal subunit protein bS16 (91 aa).

This sequence belongs to the bacterial ribosomal protein bS16 family.

The polypeptide is Small ribosomal subunit protein bS16 (Ruthia magnifica subsp. Calyptogena magnifica).